We begin with the raw amino-acid sequence, 528 residues long: Aspartic proteinase-like protein 1 (528 aa).

A signal peptide spans 1-22 (MVSRSAFLLFCVLFLATEETLA). The Peptidase A1 domain maps to 100 to 449 (HYTWIDIGTP…DRENMKLGWS (350 aa)). Asp-118 is an active-site residue. N-linked (GlcNAc...) asparagine glycosylation is found at Asn-193 and Asn-217. Residue Asp-333 is part of the active site. N-linked (GlcNAc...) asparagine glycosylation is found at Asn-358 and Asn-391. Residues 451-503 (SKCQEDKIEPPQASPGSTSSPNPLPTDEQQSRGGHAVSPAIAGKTPSKTPSSS) are disordered. The span at 464-482 (SPGSTSSPNPLPTDEQQSR) shows a compositional bias: polar residues. Residues 494–503 (KTPSKTPSSS) are compositionally biased toward low complexity. Ser-503 is lipidated: GPI-anchor amidated serine. Positions 504–528 (SSYSFSSIMRLFNSLLLLHWLASLM) are cleaved as a propeptide — removed in mature form.

This sequence belongs to the peptidase A1 family.

The protein resides in the cell membrane. The polypeptide is Aspartic proteinase-like protein 1 (Arabidopsis thaliana (Mouse-ear cress)).